The sequence spans 96 residues: NADH-ubiquinone oxidoreductase chain 4L (96 aa).

The next 3 membrane-spanning stretches (helical) occupy residues Ile2–Val22, Leu28–Ile48, and Met62–Ile82.

This sequence belongs to the complex I subunit 4L family.

Its subcellular location is the mitochondrion membrane. It catalyses the reaction a ubiquinone + NADH + 5 H(+)(in) = a ubiquinol + NAD(+) + 4 H(+)(out). Core subunit of the mitochondrial membrane respiratory chain NADH dehydrogenase (Complex I) that is believed to belong to the minimal assembly required for catalysis. Complex I functions in the transfer of electrons from NADH to the respiratory chain. The immediate electron acceptor for the enzyme is believed to be ubiquinone. This chain is NADH-ubiquinone oxidoreductase chain 4L (mt:ND4L), found in Drosophila nasuta F (Fruit fly).